Reading from the N-terminus, the 384-residue chain is GTPase Obg (384 aa).

The region spanning 1 to 159 (MKFIDEAKIE…RSLQLELKVL (159 aa)) is the Obg domain. Disordered regions lie at residues 20 to 46 (ATSF…GSVW) and 129 to 149 (HFKS…EGET). Gly residues predominate over residues 33-43 (GPDGGDGGKGG). The segment covering 130–143 (FKSSVNRAPKQSTP) has biased composition (polar residues). Residues 160–348 (ADVGLLGMPN…LVHQINQYLA (189 aa)) form the OBG-type G domain. Residues 166–173 (GMPNAGKS), 191–195 (FTTLH), 213–216 (DIPG), 284–287 (NKLD), and 329–331 (SAL) contribute to the GTP site. Mg(2+) is bound by residues Ser173 and Thr193.

It belongs to the TRAFAC class OBG-HflX-like GTPase superfamily. OBG GTPase family. Monomer. Requires Mg(2+) as cofactor.

It is found in the cytoplasm. Functionally, an essential GTPase which binds GTP, GDP and possibly (p)ppGpp with moderate affinity, with high nucleotide exchange rates and a fairly low GTP hydrolysis rate; the half-life of the GTP-bound state is about 50 minutes. Plays a role in control of the cell cycle, stress response, ribosome biogenesis and in those bacteria that undergo differentiation, in morphogenesis control. The chain is GTPase Obg from Neisseria gonorrhoeae (strain ATCC 700825 / FA 1090).